A 302-amino-acid polypeptide reads, in one-letter code: MAHKLDGKQLAGEIEQRLSHEITLCLKKGVRPPGLAVIRVGDDPASQVYVSNKEKACRRAGIKSFGCHLDANSSFREIEEQIIKLNSNQEVDGILLQLPLPIGLDAGRLLKVIDPRKDADGLHTLNLGRLLKDEIGPRSCTPAGVMALLAANQIEIKGKNTVVIGRSILVGKPMALMLQAANATVTLVHSHTRDLIGFTKQAEILVVAAGKPQLIGLEHVKEKSVVVDVGIHRVFKDQNLGDAGGYKLCGDVRREEVDDFVSAITPVPGGVGPMTVAMLLVNTVNSWQQHCDLSLSLDDLLP.

Residues 165-167 (GRS), Ser-190, and Ile-231 contribute to the NADP(+) site.

Belongs to the tetrahydrofolate dehydrogenase/cyclohydrolase family. In terms of assembly, homodimer.

It carries out the reaction (6R)-5,10-methylene-5,6,7,8-tetrahydrofolate + NADP(+) = (6R)-5,10-methenyltetrahydrofolate + NADPH. It catalyses the reaction (6R)-5,10-methenyltetrahydrofolate + H2O = (6R)-10-formyltetrahydrofolate + H(+). It functions in the pathway one-carbon metabolism; tetrahydrofolate interconversion. Functionally, catalyzes the oxidation of 5,10-methylenetetrahydrofolate to 5,10-methenyltetrahydrofolate and then the hydrolysis of 5,10-methenyltetrahydrofolate to 10-formyltetrahydrofolate. This chain is Bifunctional protein FolD, found in Prochlorococcus marinus (strain MIT 9211).